We begin with the raw amino-acid sequence, 459 residues long: Transcription factor AP-2-beta (459 aa).

A Glycyl lysine isopeptide (Lys-Gly) (interchain with G-Cter in SUMO) cross-link involves residue K21. The tract at residues 30 to 139 is disordered; it reads HDGVPSHSSR…PQLSGLDPRR (110 aa). Over residues 35-51 the composition is skewed to polar residues; it reads SHSSRLSQLGSVSQGPY. Low complexity predominate over residues 121–132; it reads LLPQPRAALPQL. At S258 the chain carries Phosphoserine; by PKA. Positions 299–429 are H-S-H (helix-span-helix), dimerization; the sequence is RRKAANVTLL…YLTEALKGMD (131 aa). The segment at 435-459 is disordered; the sequence is NTTNRHTSGEGPGSKTGDKEEKHRK. Residues 450–459 show a composition bias toward basic and acidic residues; the sequence is TGDKEEKHRK.

It belongs to the AP-2 family. As to quaternary structure, binds DNA as a dimer. Can form homodimers or heterodimers with other AP-2 family members. Interacts with CITED4. Interacts with UBE2I. Interacts with KCTD1; this interaction represses transcription activation. Interacts with CITED2 (via C-terminus); the interaction stimulates TFAP2B-transcriptional activity. Sumoylated. Sumoylated on Lys-21; which inhibits transcriptional activity. Localizes to neurons in areas of the cerebral cortex, cerebellum and hypothalamus (at protein level).

The protein resides in the nucleus. Functionally, sequence-specific DNA-binding protein that interacts with inducible viral and cellular enhancer elements to regulate transcription of selected genes. AP-2 factors bind to the consensus sequence 5'-GCCNNNGGC-3' and activate genes involved in a large spectrum of important biological functions including proper eye, face, body wall, limb and neural tube development. They also suppress a number of genes including MCAM/MUC18, C/EBP alpha and MYC. AP-2-beta appears to be required for normal face and limb development and for proper terminal differentiation and function of renal tubular epithelia. This Mus musculus (Mouse) protein is Transcription factor AP-2-beta (Tfap2b).